The following is a 206-amino-acid chain: Large ribosomal subunit protein uL4 (206 aa).

The interval 43–78 (ARSGNRKQKDREEVKHTTKKPWRQKGTGRARAGMSS) is disordered. Basic and acidic residues predominate over residues 49–58 (KQKDREEVKH). A compositionally biased stretch (basic residues) spans 59–70 (TTKKPWRQKGTG).

Belongs to the universal ribosomal protein uL4 family. In terms of assembly, part of the 50S ribosomal subunit.

Its function is as follows. One of the primary rRNA binding proteins, this protein initially binds near the 5'-end of the 23S rRNA. It is important during the early stages of 50S assembly. It makes multiple contacts with different domains of the 23S rRNA in the assembled 50S subunit and ribosome. Forms part of the polypeptide exit tunnel. This Cupriavidus pinatubonensis (strain JMP 134 / LMG 1197) (Cupriavidus necator (strain JMP 134)) protein is Large ribosomal subunit protein uL4.